Reading from the N-terminus, the 94-residue chain is Small ribosomal subunit protein bS16 (94 aa).

The protein belongs to the bacterial ribosomal protein bS16 family.

The sequence is that of Small ribosomal subunit protein bS16 from Thermosipho africanus (strain TCF52B).